The following is a 363-amino-acid chain: Phosphoserine aminotransferase (363 aa).

An L-glutamate-binding site is contributed by Arg-42. Residues 76 to 77 (GR), Trp-102, Thr-156, Asp-175, and Gln-198 contribute to the pyridoxal 5'-phosphate site. Lys-199 carries the N6-(pyridoxal phosphate)lysine modification. Position 240 to 241 (240 to 241 (NT)) interacts with pyridoxal 5'-phosphate.

This sequence belongs to the class-V pyridoxal-phosphate-dependent aminotransferase family. SerC subfamily. In terms of assembly, homodimer. The cofactor is pyridoxal 5'-phosphate.

It localises to the cytoplasm. The catalysed reaction is O-phospho-L-serine + 2-oxoglutarate = 3-phosphooxypyruvate + L-glutamate. It catalyses the reaction 4-(phosphooxy)-L-threonine + 2-oxoglutarate = (R)-3-hydroxy-2-oxo-4-phosphooxybutanoate + L-glutamate. The protein operates within amino-acid biosynthesis; L-serine biosynthesis; L-serine from 3-phospho-D-glycerate: step 2/3. It functions in the pathway cofactor biosynthesis; pyridoxine 5'-phosphate biosynthesis; pyridoxine 5'-phosphate from D-erythrose 4-phosphate: step 3/5. Its function is as follows. Catalyzes the reversible conversion of 3-phosphohydroxypyruvate to phosphoserine and of 3-hydroxy-2-oxo-4-phosphonooxybutanoate to phosphohydroxythreonine. The chain is Phosphoserine aminotransferase from Shewanella baltica (strain OS195).